The chain runs to 316 residues: MAETESCTFHVPSLEEICSILKSGLLKNFADVNVIVTECPDLTKEPFEFPVKGLCGKSRIADVGGVPYLVPMPRLDKVYNVNTVAKKIGLPGAYILGAGATSHRSLGMNAELIFSVQAESTSTLAVNKSYVASVNPGDGSCLLEKYRDRNNDNDFGLLSNLYACEGKPGKVIEVSVKRRIGQDNFVSCMRKSLKEHYGENAVGMGGTFLIKQGKAKLHVMPREYSACPLNTDEDVNGWLKFYDMTAPLICQSVFVSHDPGYDLRLEHTHCYSHHGEGGHYHYDTTPDTVEYLGYFHPAEFLYRIDKPSATHLVGRD.

The Zn(2+) site is built by H267, H269, and H279.

As to quaternary structure, monomer. The cofactor is Zn(2+).

Its subcellular location is the nucleus. It is found in the cytoplasm. Its function is as follows. Exhibits ester hydrolase activity on the substrate p-nitrophenyl acetate, in vitro. May regulate DNA damage and repair by regulating HIF1A degradation via chaperone-mediated autophagy (CMA). In Xenopus laevis (African clawed frog), this protein is Ester hydrolase C11orf54 homolog.